A 468-amino-acid polypeptide reads, in one-letter code: mRNA cleavage and polyadenylation factor CLP1 (468 aa).

The interval 1–22 (MLSLPGLNLAPQPAEPLNAPTS) is disordered. Residues E35, K74, and 138 to 143 (HSGKTS) each bind ATP.

The protein belongs to the Clp1 family. Clp1 subfamily. As to quaternary structure, component of a pre-mRNA cleavage factor complex. Interacts directly with PCF11.

It localises to the nucleus. Required for endonucleolytic cleavage during polyadenylation-dependent pre-mRNA 3'-end formation. The protein is mRNA cleavage and polyadenylation factor CLP1 of Phaeosphaeria nodorum (strain SN15 / ATCC MYA-4574 / FGSC 10173) (Glume blotch fungus).